A 315-amino-acid polypeptide reads, in one-letter code: MDEKKRKVTVVGAGAVGSTFAYALAQSGYADEIAITDMNKNFAEGQALDLVQGLPFLPQVDIHAGDKTDYADSDIVVVTAGAKQQSGETRIDLLKRNASIITGIAKDIAESGCSGVMLIVSNPVDILTRAALKASGWERGRVIGSGTVLDTARFRYTLSKECGVDARNIHGYILGEHGDSEFAAWSMTSVAGRRIDEYCSGGVCSSGPHFDKAKILEEVRNSAYHIIDYKGSTYFAVGLALTRIAGAILRNEHSILSVSMTLDGEFGLKDVCLSVPCIVGRSGAERVIESDLPADEQAALEASAKRLKEAFTEMN.

NAD(+) contacts are provided by residues valine 16, aspartate 37, and 81 to 82; that span reads GA. Residues glutamine 84, arginine 90, and 122–125 each bind substrate; that span reads NPVD. NAD(+) is bound by residues 120–122 and serine 145; that span reads VSN. 150–153 serves as a coordination point for substrate; the sequence is DTAR. The beta-D-fructose 1,6-bisphosphate site is built by arginine 155 and histidine 170. Histidine 177 (proton acceptor) is an active-site residue. Tyrosine 224 bears the Phosphotyrosine mark. Threonine 233 serves as a coordination point for substrate.

The protein belongs to the LDH/MDH superfamily. LDH family. In terms of assembly, homotetramer.

It localises to the cytoplasm. The catalysed reaction is (S)-lactate + NAD(+) = pyruvate + NADH + H(+). Its pathway is fermentation; pyruvate fermentation to lactate; (S)-lactate from pyruvate: step 1/1. Its activity is regulated as follows. Allosterically activated by fructose 1,6-bisphosphate (FBP). Functionally, catalyzes the conversion of lactate to pyruvate. This chain is L-lactate dehydrogenase, found in Treponema denticola (strain ATCC 35405 / DSM 14222 / CIP 103919 / JCM 8153 / KCTC 15104).